A 418-amino-acid polypeptide reads, in one-letter code: eIF5-mimic protein 2 (418 aa).

Over residues 1-14 the composition is skewed to polar residues; sequence MNQKQQKPTLSGQR. Residues 1-25 form a disordered region; sequence MNQKQQKPTLSGQRFKTRKRDEKER. The W2 domain maps to 246–413; that stretch reads NQQTIGARKE…KNAEEESESE (168 aa).

This sequence belongs to the BZW family.

Its function is as follows. Translation initiation regulator which may repress repeat-associated non-AUG (RAN) initiated translation probably by acting as a competitive inhibitor of eukaryotic translation initiation factor 5 (EIF5) function. Enhances histone H4 gene transcription but does not seem to bind DNA directly. The protein is eIF5-mimic protein 2 (BZW1) of Gallus gallus (Chicken).